Consider the following 432-residue polypeptide: Putative D-alanyl-D-alanine carboxypeptidase (432 aa).

Residues 7-25 (ATVLLTFSLSAFAVEYPVL) form a helical; Signal-anchor membrane-spanning segment.

The protein belongs to the peptidase S12 family. YfeW subfamily.

The protein localises to the cell inner membrane. It catalyses the reaction Preferential cleavage: (Ac)2-L-Lys-D-Ala-|-D-Ala. Also transpeptidation of peptidyl-alanyl moieties that are N-acyl substituents of D-alanine.. The protein is Putative D-alanyl-D-alanine carboxypeptidase of Salmonella heidelberg (strain SL476).